A 351-amino-acid polypeptide reads, in one-letter code: Thiamine-phosphate synthase (351 aa).

The tract at residues 1–129 (MVEPYSQQKQ…GQACKQMRYR (129 aa)) is unknown. Residues 130 to 351 (VYSLETNLMG…SQLNRIKPES (222 aa)) are thiamine-phosphate synthase. 4-amino-2-methyl-5-(diphosphooxymethyl)pyrimidine-binding positions include 177–181 (QYRDK) and Asn-209. Mg(2+) is bound by residues Asp-210 and Asp-229. Ser-248 is a 4-amino-2-methyl-5-(diphosphooxymethyl)pyrimidine binding site. Position 274-276 (274-276 (TPT)) interacts with 2-[(2R,5Z)-2-carboxy-4-methylthiazol-5(2H)-ylidene]ethyl phosphate. Position 277 (Lys-277) interacts with 4-amino-2-methyl-5-(diphosphooxymethyl)pyrimidine. Gly-304 lines the 2-[(2R,5Z)-2-carboxy-4-methylthiazol-5(2H)-ylidene]ethyl phosphate pocket.

It belongs to the thiamine-phosphate synthase family. It depends on Mg(2+) as a cofactor.

It carries out the reaction 2-[(2R,5Z)-2-carboxy-4-methylthiazol-5(2H)-ylidene]ethyl phosphate + 4-amino-2-methyl-5-(diphosphooxymethyl)pyrimidine + 2 H(+) = thiamine phosphate + CO2 + diphosphate. It catalyses the reaction 2-(2-carboxy-4-methylthiazol-5-yl)ethyl phosphate + 4-amino-2-methyl-5-(diphosphooxymethyl)pyrimidine + 2 H(+) = thiamine phosphate + CO2 + diphosphate. The catalysed reaction is 4-methyl-5-(2-phosphooxyethyl)-thiazole + 4-amino-2-methyl-5-(diphosphooxymethyl)pyrimidine + H(+) = thiamine phosphate + diphosphate. It functions in the pathway cofactor biosynthesis; thiamine diphosphate biosynthesis; thiamine phosphate from 4-amino-2-methyl-5-diphosphomethylpyrimidine and 4-methyl-5-(2-phosphoethyl)-thiazole: step 1/1. In terms of biological role, condenses 4-methyl-5-(beta-hydroxyethyl)thiazole monophosphate (THZ-P) and 2-methyl-4-amino-5-hydroxymethyl pyrimidine pyrophosphate (HMP-PP) to form thiamine monophosphate (TMP). This is Thiamine-phosphate synthase from Nostoc sp. (strain PCC 7120 / SAG 25.82 / UTEX 2576).